A 716-amino-acid chain; its full sequence is Polyribonucleotide nucleotidyltransferase (716 aa).

Positions 495 and 501 each coordinate Mg(2+). Positions 562–621 (PRLFRIQINPEQIGLVIGPGGKTIRSITEQTGAKIDIEDTGAVTISAVDADSALRAKSII) constitute a KH domain. Residues 631–699 (GDVYIGKVTR…QKGRVNLTRK (69 aa)) enclose the S1 motif domain.

Belongs to the polyribonucleotide nucleotidyltransferase family. Mg(2+) serves as cofactor.

The protein localises to the cytoplasm. The catalysed reaction is RNA(n+1) + phosphate = RNA(n) + a ribonucleoside 5'-diphosphate. Involved in mRNA degradation. Catalyzes the phosphorolysis of single-stranded polyribonucleotides processively in the 3'- to 5'-direction. In Synechococcus elongatus (strain ATCC 33912 / PCC 7942 / FACHB-805) (Anacystis nidulans R2), this protein is Polyribonucleotide nucleotidyltransferase.